The chain runs to 234 residues: Probable transcriptional regulatory protein PFL_3960 (234 aa).

This sequence belongs to the TACO1 family.

The protein localises to the cytoplasm. In Pseudomonas fluorescens (strain ATCC BAA-477 / NRRL B-23932 / Pf-5), this protein is Probable transcriptional regulatory protein PFL_3960.